Reading from the N-terminus, the 470-residue chain is FLYWCH transcription factor 2 (470 aa).

Residues 102–148 are disordered; the sequence is SQLISEDTRPSASSSPSSTATAVSNSGQSNATSTSSSSTEPEYKPRN. Positions 111–140 are enriched in low complexity; sequence PSASSSPSSTATAVSNSGQSNATSTSSSST. The FLYWCH-type zinc-finger motif lies at 145–204; it reads KPRNVREKVYADGYIMSFDKKSCCGTKEFWRCERKNDCNARMHSDINTREIVRKLHPHNH.

Probable transcription factor. May bind to the promoters of target genes, including micro-RNA genes, in order to repress expression, and acting redundantly with flh-1 and flh-3. The polypeptide is FLYWCH transcription factor 2 (Caenorhabditis elegans).